The sequence spans 373 residues: Chaperone protein DnaJ (373 aa).

In terms of domain architecture, J spans 5–71; it reads DYYEILGVSR…EKRAMYDKFG (67 aa). The CR-type zinc finger occupies 144–226; the sequence is GVKIPLEYDR…CGGTGRIRKR (83 aa). Cys-157, Cys-160, Cys-174, Cys-177, Cys-200, Cys-203, Cys-214, and Cys-217 together coordinate Zn(2+). 4 CXXCXGXG motif repeats span residues 157-164, 174-181, 200-207, and 214-221; these read CEHCHGEG, CPKCHGTG, CNQCGGTG, and CRVCGGTG.

This sequence belongs to the DnaJ family. Homodimer. Zn(2+) serves as cofactor.

It localises to the cytoplasm. Its function is as follows. Participates actively in the response to hyperosmotic and heat shock by preventing the aggregation of stress-denatured proteins and by disaggregating proteins, also in an autonomous, DnaK-independent fashion. Unfolded proteins bind initially to DnaJ; upon interaction with the DnaJ-bound protein, DnaK hydrolyzes its bound ATP, resulting in the formation of a stable complex. GrpE releases ADP from DnaK; ATP binding to DnaK triggers the release of the substrate protein, thus completing the reaction cycle. Several rounds of ATP-dependent interactions between DnaJ, DnaK and GrpE are required for fully efficient folding. Also involved, together with DnaK and GrpE, in the DNA replication of plasmids through activation of initiation proteins. The chain is Chaperone protein DnaJ from Thermosipho melanesiensis (strain DSM 12029 / CIP 104789 / BI429).